A 379-amino-acid chain; its full sequence is Cytoplasmic tRNA 2-thiolation protein 1 (379 aa).

The protein belongs to the TtcA family. CTU1/NCS6/ATPBD3 subfamily.

The protein localises to the cytoplasm. It functions in the pathway tRNA modification; 5-methoxycarbonylmethyl-2-thiouridine-tRNA biosynthesis. Functionally, plays a central role in 2-thiolation of mcm(5)S(2)U at tRNA wobble positions of tRNA(Lys), tRNA(Glu) and tRNA(Gln). Directly binds tRNAs and probably acts by catalyzing adenylation of tRNAs, an intermediate required for 2-thiolation. It is unclear whether it acts as a sulfurtransferase that transfers sulfur from thiocarboxylated URM1 onto the uridine of tRNAs at wobble position. Prior mcm(5) tRNA modification by the elongator complex is required for 2-thiolation. May also be involved in protein urmylation. The chain is Cytoplasmic tRNA 2-thiolation protein 1 from Lodderomyces elongisporus (strain ATCC 11503 / CBS 2605 / JCM 1781 / NBRC 1676 / NRRL YB-4239) (Yeast).